The following is a 449-amino-acid chain: Alginate biosynthesis transcriptional regulatory protein AlgB (449 aa).

In terms of domain architecture, Response regulatory spans 10 to 124 (RILLVDDESA…QLRLAAAKQL (115 aa)). Asp-59 carries the post-translational modification 4-aspartylphosphate. Residues 147–376 (LESHSPAMAA…LRNVIERASI (230 aa)) enclose the Sigma-54 factor interaction domain. ATP contacts are provided by residues 175 to 182 (GESGSGKG) and 238 to 247 (ADGGTLFLDE). The segment at residues 426–445 (LDQAAKTLGIDASTLYRKRK) is a DNA-binding region (H-T-H motif).

Post-translationally, phosphorylated by KinB.

It functions in the pathway glycan biosynthesis; alginate biosynthesis [regulation]. In terms of biological role, member of the two-component regulatory system AlgB/KinB involved in regulation of alginate biosynthesis genes. Positive regulator of the alginate biosynthetic gene AlgD. The protein is Alginate biosynthesis transcriptional regulatory protein AlgB (algB) of Pseudomonas aeruginosa (strain ATCC 15692 / DSM 22644 / CIP 104116 / JCM 14847 / LMG 12228 / 1C / PRS 101 / PAO1).